The primary structure comprises 554 residues: CTP synthase (554 aa).

The interval 1–265 (MTPLIFVTGG…DELVIVQFKL (265 aa)) is amidoligase domain. Ser-13 is a CTP binding site. Ser-13 is a binding site for UTP. ATP contacts are provided by residues 14–19 (SLGKGI) and Asp-71. Mg(2+)-binding residues include Asp-71 and Glu-139. CTP contacts are provided by residues 146 to 148 (DIE), 186 to 191 (KTKPTQ), and Lys-222. Residues 186–191 (KTKPTQ) and Lys-222 contribute to the UTP site. Residues 292–545 (TIAVVGKYVD…VRAAREKKAG (254 aa)) enclose the Glutamine amidotransferase type-1 domain. Gly-353 provides a ligand contact to L-glutamine. Catalysis depends on Cys-380, which acts as the Nucleophile; for glutamine hydrolysis. L-glutamine contacts are provided by residues 381 to 384 (YGMQ), Glu-404, and Arg-471. Catalysis depends on residues His-518 and Glu-520.

The protein belongs to the CTP synthase family. Homotetramer.

The enzyme catalyses UTP + L-glutamine + ATP + H2O = CTP + L-glutamate + ADP + phosphate + 2 H(+). The catalysed reaction is L-glutamine + H2O = L-glutamate + NH4(+). It catalyses the reaction UTP + NH4(+) + ATP = CTP + ADP + phosphate + 2 H(+). It participates in pyrimidine metabolism; CTP biosynthesis via de novo pathway; CTP from UDP: step 2/2. With respect to regulation, allosterically activated by GTP, when glutamine is the substrate; GTP has no effect on the reaction when ammonia is the substrate. The allosteric effector GTP functions by stabilizing the protein conformation that binds the tetrahedral intermediate(s) formed during glutamine hydrolysis. Inhibited by the product CTP, via allosteric rather than competitive inhibition. Functionally, catalyzes the ATP-dependent amination of UTP to CTP with either L-glutamine or ammonia as the source of nitrogen. Regulates intracellular CTP levels through interactions with the four ribonucleotide triphosphates. The protein is CTP synthase of Xanthomonas oryzae pv. oryzae (strain MAFF 311018).